A 238-amino-acid polypeptide reads, in one-letter code: Large ribosomal subunit protein uL2 (238 aa).

Residues 203 to 223 are disordered; sequence GGGAWKHPGKPTTVSRNAPPG.

It belongs to the universal ribosomal protein uL2 family. As to quaternary structure, part of the 50S ribosomal subunit. Forms a bridge to the 30S subunit in the 70S ribosome.

One of the primary rRNA binding proteins. Required for association of the 30S and 50S subunits to form the 70S ribosome, for tRNA binding and peptide bond formation. It has been suggested to have peptidyltransferase activity; this is somewhat controversial. Makes several contacts with the 16S rRNA in the 70S ribosome. This Methanosarcina barkeri (strain Fusaro / DSM 804) protein is Large ribosomal subunit protein uL2.